We begin with the raw amino-acid sequence, 360 residues long: Beta-1,3-N-acetylglucosaminyltransferase manic fringe (360 aa).

Residues 1–5 (MILRR) lie on the Cytoplasmic side of the membrane. The helical; Signal-anchor for type II membrane protein transmembrane segment at 6–26 (LFHVLPAFAFTLFILVLLDLQ) threads the bilayer. Over 27 to 360 (LRTRSDQKPQ…ALSWNQHVMH (334 aa)) the chain is Lumenal. Residues 51 to 74 (TTAENQHRDGAHEKEKAEGQKWTE) form a disordered region. The segment covering 55–74 (NQHRDGAHEKEKAEGQKWTE) has biased composition (basic and acidic residues). R100 provides a ligand contact to substrate. Intrachain disulfides connect C139/C150 and C168/C231. D172 is a binding site for substrate. D173 contributes to the Mn(2+) binding site. An N-linked (GlcNAc...) asparagine glycan is attached at N214. D261 is an active-site residue. Position 285 (H285) interacts with Mn(2+). A disulfide bridge links C335 with C344.

The protein belongs to the glycosyltransferase 31 family. Mn(2+) serves as cofactor.

It is found in the golgi apparatus membrane. It catalyses the reaction 3-O-(alpha-L-fucosyl)-L-threonyl-[EGF-like domain protein] + UDP-N-acetyl-alpha-D-glucosamine = 3-O-(N-acetyl-beta-D-glucosaminyl-(1-&gt;3)-alpha-L-fucosyl)-L-threonyl-[EGF-like domain protein] + UDP + H(+). The enzyme catalyses 3-O-(alpha-L-fucosyl)-L-seryl-[EGF-like domain protein] + UDP-N-acetyl-alpha-D-glucosamine = 3-O-(N-acetyl-beta-D-glucosaminyl-(1-&gt;3)-alpha-L-fucosyl)-L-seryl-[EGF-like domain protein] + UDP + H(+). Its function is as follows. Glycosyltransferase that initiates the elongation of O-linked fucose residues attached to EGF-like repeats in the extracellular domain of Notch molecules. The polypeptide is Beta-1,3-N-acetylglucosaminyltransferase manic fringe (Danio rerio (Zebrafish)).